A 93-amino-acid chain; its full sequence is MSSVRNIAALALVLLVLAEWSAAMPTTDKDKERLLNTVDLIDDDGSIETALINYLFTKQIVKRLRSQLDIGDLQRKRSYWKQCAFNAVSCFGK.

The N-terminal stretch at 1–23 is a signal peptide; sequence MSSVRNIAALALVLLVLAEWSAA. The propeptide occupies 24–61; it reads MPTTDKDKERLLNTVDLIDDDGSIETALINYLFTKQIV. C83 and C90 are joined by a disulfide.

The protein resides in the secreted. Functionally, inhibits juvenile hormone biosynthesis. The sequence is that of Allatostatin C from Camponotus floridanus (Florida carpenter ant).